Consider the following 272-residue polypeptide: 3-methyl-2-oxobutanoate hydroxymethyltransferase (272 aa).

Asp43 and Asp82 together coordinate Mg(2+). 3-methyl-2-oxobutanoate contacts are provided by residues 43 to 44, Asp82, and Lys112; that span reads DS. Glu114 contacts Mg(2+). Residue Glu179 is the Proton acceptor of the active site.

This sequence belongs to the PanB family. In terms of assembly, homodecamer; pentamer of dimers. Mg(2+) serves as cofactor.

The protein localises to the cytoplasm. The enzyme catalyses 3-methyl-2-oxobutanoate + (6R)-5,10-methylene-5,6,7,8-tetrahydrofolate + H2O = 2-dehydropantoate + (6S)-5,6,7,8-tetrahydrofolate. Its pathway is cofactor biosynthesis; (R)-pantothenate biosynthesis; (R)-pantoate from 3-methyl-2-oxobutanoate: step 1/2. In terms of biological role, catalyzes the reversible reaction in which hydroxymethyl group from 5,10-methylenetetrahydrofolate is transferred onto alpha-ketoisovalerate to form ketopantoate. This chain is 3-methyl-2-oxobutanoate hydroxymethyltransferase, found in Staphylococcus aureus (strain bovine RF122 / ET3-1).